The following is a 1514-amino-acid chain: Polycomb group protein ASXL1 (1514 aa).

Positions 11–86 (RTWAEAARLV…RISLFTLKKD (76 aa)) constitute an HTH HARE-type domain. Disordered stretches follow at residues 95-170 (ATVD…VMLP) and 183-249 (HVEP…RGEE). The segment covering 98 to 107 (DGDEPEDSAD) has biased composition (acidic residues). Polar residues predominate over residues 111-145 (CGSNEASTVSGENDVSLDETSSNASCSTESQSRPL). Low complexity predominate over residues 199 to 209 (SGSPSSSSSGS). The interaction with nucleosomal DNA forming a DNA clamp with BAP1 stretch occupies residues 243-246 (KRNR). The DEUBAD domain occupies 255-364 (PGSILVNTNL…FEDYYGQKLG (110 aa)). Residues 284-288 (LLLLL) carry the LXXLL motif 1 motif. The interval 300–655 (LLRLSGSALN…GGGSGAIDEG (356 aa)) is interaction with NCOA1. The short motif at 310 to 315 (NEFFTH) is the NEF motif element. Residues 336–346 (RLRQEMEKEKK) are interaction with nucleosomal DNA. Disordered regions lie at residues 378-543 (EEAK…EDRQ), 635-823 (TTAI…FDNM), 895-914 (SDPESRENIPCPEPQDEKEW), 926-952 (SVPQPESCISHWTPPPAAVGSTGSDSE), and 964-995 (ISEAPSPHSESTDTASDSEGHLSEDSSEVDAS). The Nuclear localization signal motif lies at 408-415 (FKKRSRPD). Positions 458-473 (VNSTPGPDVSSATSGQ) are enriched in polar residues. Residues serine 498 and serine 500 each carry the phosphoserine modification. 2 stretches are compositionally biased toward basic and acidic residues: residues 514-525 (QETKDQKRKSFE) and 533-543 (PEKKPRLEDRQ). A compositionally biased stretch (gly residues) spans 638-654 (IGGGGGPGGGGSGAIDE). The span at 678-692 (PSTSGESASDLQRTQ) shows a compositional bias: polar residues. 2 stretches are compositionally biased toward basic and acidic residues: residues 713–728 (ARREDSASLRKEESCL) and 779–793 (LLDDRTECESSREDQ). Positions 808–812 (LGDLL) match the LXXLL motif 2 motif. A compositionally biased stretch (polar residues) spans 971–980 (HSESTDTASD). Positions 1082 to 1087 (LVMHLL) are required for interaction with RARA. 3 disordered regions span residues 1095-1131 (KVLPPGHRSSRLESSQLPLREQSQDRGTLQGTGENNR), 1213-1234 (EQKEGHSLSQGSDPGAAPGQCL), and 1256-1338 (SEQT…VSAD). Residues 1119 to 1129 (DRGTLQGTGEN) are compositionally biased toward polar residues. Polar residues-rich tracts occupy residues 1256-1269 (SEQTDGTLSDQNNA) and 1313-1324 (SKNSVSGGVQTT). Residues 1476-1513 (SLQCACSLKAMIMCQGCGAFCHDDCIGPSKLCVLCLVV) form a PHD-type; atypical zinc finger.

Belongs to the Asx family. In terms of assembly, core component of the polycomb repressive deubiquitinase (PR-DUB) complex, at least composed of BAP1, one of ASXL1, ASXL2 or (probably) ASXL3, and one of MBD5 or MBD6. Distinct combinations of ASXL and MBD proteins may preferentially bind specific histone modification marks. The PR-DUB core associates with a number of accessory proteins, including FOXK1, FOXK2, KDM1B, HCFC1 and OGT; KDM1B specifically associates with ASXL2 PR-DUB complexes. Interacts (via DEUBAD domain) with BAP1 (via ULD domain); the interaction is direct and forms a ubiquitin binding cleft. The interaction with BAP1 is important for maintaining BAP1 stability. Together with BAP1, associates (via DEUBAD domain) with nucleosomes; interacts with nucleosomal DNA and stabilizes the orientation of the nucleosome to line up the PR-DUB complex active site with its H2AK118ub1 substrate. Interacts (via PHD domain) with MBD5 and MBD6 (via MBD domain); the interaction is probably direct and mediates association of MBD proteins with the PR-DUB core. Interacts with RARA, RXRA. Interacts with NCOA1. Interacts with PPARA and PPARG. In terms of processing, ubiquitinated by TRIP12, leading to its subsequent degradation following binding of N(6)-methyladenine methylated DNA (6mA).

Its subcellular location is the nucleus. Probable Polycomb group (PcG) protein involved in transcriptional regulation mediated by ligand-bound nuclear hormone receptors, such as retinoic acid receptors (RARs) and peroxisome proliferator-activated receptor gamma (PPARG). Acts as a coactivator of RARA and RXRA through association with NCOA1. Acts as a corepressor for PPARG and suppresses its adipocyte differentiation-inducing activity. Non-catalytic component of the PR-DUB complex, a complex that specifically mediates deubiquitination of histone H2A monoubiquitinated at 'Lys-119' (H2AK119ub1). Acts as a sensor of N(6)-methyladenine methylation on DNA (6mA): recognizes and binds 6mA DNA, leading to its ubiquitination and degradation by TRIP12, thereby inactivating the PR-DUB complex and regulating Polycomb silencing. The PR-DUB complex is an epigenetic regulator of gene expression and acts as a transcriptional coactivator, affecting genes involved in development, cell communication, signaling, cell proliferation and cell viability. ASXL1, ASXL2 and ASXL3 function redundantly in the PR-DUB complex. The ASXL proteins are essential for chromatin recruitment and transcriptional activation of associated genes. ASXL1 and ASXL2 are important for BAP1 protein stability. Together with BAP1, negatively regulates epithelial-mesenchymal transition (EMT) of trophoblast stem cells during placental development by regulating genes involved in epithelial cell integrity, cell adhesion and cytoskeletal organization. In Mus musculus (Mouse), this protein is Polycomb group protein ASXL1 (Asxl1).